A 257-amino-acid chain; its full sequence is Global transcriptional regulator CodY (257 aa).

The GAF domain stretch occupies residues 1–155 (MSLLSKTREL…AATVIGMEIL (155 aa)). Positions 203-222 (ASKVADRVGITRSVIVNALR) form a DNA-binding region, H-T-H motif.

The protein belongs to the CodY family.

Its subcellular location is the cytoplasm. In terms of biological role, DNA-binding global transcriptional regulator which is involved in the adaptive response to starvation and acts by directly or indirectly controlling the expression of numerous genes in response to nutrient availability. During rapid exponential growth, CodY is highly active and represses genes whose products allow adaptation to nutrient depletion. This is Global transcriptional regulator CodY from Staphylococcus saprophyticus subsp. saprophyticus (strain ATCC 15305 / DSM 20229 / NCIMB 8711 / NCTC 7292 / S-41).